An 839-amino-acid chain; its full sequence is Sodium/hydrogen exchanger 3 (839 aa).

A signal peptide spans 1-32 (MPLGVRGTRREFRFPVWGLLLLALWMLPRALG). Residues 33–56 (VEEIPGPDSHEKQGFQIVTFKWHH) are Extracellular-facing. The chain crosses the membrane as a helical span at residues 57 to 79 (VQDPYIIALWILVASLAKIVFHL). Residues 80–87 (SHKVTSVV) lie on the Cytoplasmic side of the membrane. A helical transmembrane segment spans residues 88–107 (PESALLIVLGLILGGIVWAA). The Extracellular portion of the chain corresponds to 108-116 (DHIASFTLT). A helical membrane pass occupies residues 117–134 (PTVFFFYLLPPIVLDAGY). The Cytoplasmic segment spans residues 135–137 (FMP). Residues 138–173 (NRLFFGNLGTILLYAVIGTVWNAATTGLSLYGVYLS) form a helical membrane-spanning segment. Residues glycine 143, glycine 146, and threonine 147 each contribute to the a 1,2-diacyl-sn-glycero-3-phospho-(1D-myo-inositol) site. Residues 174–186 (GIMGDLSIGLLDF) are Extracellular-facing. Residues 187-208 (LLFGSLIAAVDPVAVLAVFEEV) traverse the membrane as a helical segment. At 209–210 (HV) the chain is on the cytoplasmic side. Residues 211 to 242 (NDVLFIIVFGESLLNDAVTVVLYNVFDSFVSL) form a helical membrane-spanning segment. Topologically, residues 243-249 (GADKVTG) are extracellular. Residues 250-284 (VDCVKGIVSFFVVSLGGTLIGIIFAFLLSLVTRFT) form a helical membrane-spanning segment. At 285-286 (KH) the chain is on the cytoplasmic side. The helical transmembrane segment at 287 to 309 (VRIIEPGFVFIISYLSYLTSEML) threads the bilayer. At 310-311 (SL) the chain is on the extracellular side. Residues 312–328 (SAILAITFCGICCQKYV) traverse the membrane as a helical segment. The Cytoplasmic portion of the chain corresponds to 329–335 (KANISEQ). A helical transmembrane segment spans residues 336-364 (SATTVRYTMKMLASGAETIIFMFLGISAV). Residues 365 to 372 (DPAIWTWN) lie on the Extracellular side of the membrane. Residues 373 to 394 (TAFILLTLVFISVYRAIGVVLQ) form a helical membrane-spanning segment. Topologically, residues 395 to 407 (TWLLNKYRMVQLE) are cytoplasmic. Residue methionine 403 participates in a 1,2-diacyl-sn-glycero-3-phospho-(1D-myo-inositol) binding. The helical transmembrane segment at 408–431 (IIDQVVMSYGGLRGAVAYALVVLL) threads the bilayer. Residues 432–438 (DEKKVKE) are Extracellular-facing. Residues 439–472 (KNLFVSTTIIVVFFTVIFQGLTIKPLVQWLKVKK) traverse the membrane as a helical segment. At 473-839 (SEHREPKLNE…RSFLPESTHM (367 aa)) the chain is on the cytoplasmic side. Positions 502, 503, and 505 each coordinate a 1,2-diacyl-sn-glycero-3-phospho-(1D-myo-inositol). Residues serine 560 and serine 568 each carry the phosphoserine modification. Positions 581 to 595 (RPSTVEASVSYLLRE) are interaction with EZR. The segment at 596–673 (NVSTVCLDMQ…RKRLESFKST (78 aa)) is interaction with NHERF4. Positions 597-701 (VSTVCLDMQA…GQKRRNSSIP (105 aa)) are interaction with AHCYL1. A phosphoserine mark is found at serine 598 and serine 613. Serine 669 is subject to Phosphoserine; by SGK1. Positions 688 to 697 (KRERGQKRRN) are enriched in basic residues. The interval 688-710 (KRERGQKRRNSSIPNGKIPMESP) is disordered. Serine 724, serine 815, and serine 818 each carry phosphoserine.

Belongs to the monovalent cation:proton antiporter 1 (CPA1) transporter (TC 2.A.36) family. In terms of assembly, homodimer. Found in the forms of complex and dynamic macromolecular complexes. Binds NHERF1 and NHERF2. Interacts with CHP1, CHP2 and SHANK2. Interacts with NHERF4 and interactions decrease in response to elevated calcium ion levels. Interacts with PDZK1 (via C-terminal PDZ domain). Interacts with AHCYL1; the interaction is required for SLC9A3 activity. Interacts with EZR; interaction targets SLC9A3 to the apical membrane. Interacts with SNX27 (via PDZ domains); directs SLC9A3 membrane insertion from early endosomes to the plasma membrane. Post-translationally, phosphorylated by PKA, which inhibits activity. Phosphorylation at Ser-669 by SGK1 is associated with increased abundance at the cell membrane.

Its subcellular location is the apical cell membrane. The protein localises to the cell membrane. The protein resides in the recycling endosome membrane. It localises to the early endosome membrane. It catalyses the reaction Na(+)(in) + H(+)(out) = Na(+)(out) + H(+)(in). Its activity is regulated as follows. Seems to switch between active and inactive modes in response to various stimuli. Activated directly or indirectly by membrane phosphatidylinositol (PIs). Regulated by a variety of auxiliary proteins, which facilitate the maturation, cell surface expression and function of the transporter. Inhibited specifically by the drug tenapanor. Plasma membrane Na(+)/H(+) antiporter. Exchanges intracellular H(+) ions for extracellular Na(+) in 1:1 stoichiometry, playing a key role in salt and fluid absorption and pH homeostasis. Major apical Na(+)/H(+) exchanger in kidney and intestine playing an important role in renal and intestine Na(+) absorption and blood pressure regulation. In Didelphis virginiana (North American opossum), this protein is Sodium/hydrogen exchanger 3 (SLC9A3).